We begin with the raw amino-acid sequence, 295 residues long: Protein transport protein SSO2 (295 aa).

The span at methionine 1 to tyrosine 18 shows a compositional bias: low complexity. The tract at residues methionine 1–serine 31 is disordered. Over methionine 1–leucine 270 the chain is Cytoplasmic. Polar residues predominate over residues glutamate 19–serine 31. The stretch at glutamate 33 to alanine 110 forms a coiled coil. The t-SNARE coiled-coil homology domain occupies leucine 196–alanine 258. A helical; Anchor for type IV membrane protein membrane pass occupies residues tryptophan 271–phenylalanine 291. Topologically, residues glycine 292–lysine 295 are extracellular.

It belongs to the syntaxin family.

It localises to the membrane. Functionally, late secretory t-SNARE protein required for secretion and proper cytokinesis. Plays an important role in the secretion of virulence-associated extracellular enzymes and vesicle-mediated polarized hyphal growth. The protein is Protein transport protein SSO2 (SSO2) of Candida albicans (strain SC5314 / ATCC MYA-2876) (Yeast).